Consider the following 273-residue polypeptide: Large ribosomal subunit protein uL2 (273 aa).

Positions 228 to 273 (VDHPHGGGEGKTSGGRHPVTPWGFSTKGKKTRKNKRTSKFIVKKRK) are disordered. Basic residues predominate over residues 254 to 273 (KGKKTRKNKRTSKFIVKKRK).

Belongs to the universal ribosomal protein uL2 family. As to quaternary structure, part of the 50S ribosomal subunit. Forms a bridge to the 30S subunit in the 70S ribosome.

Its function is as follows. One of the primary rRNA binding proteins. Required for association of the 30S and 50S subunits to form the 70S ribosome, for tRNA binding and peptide bond formation. It has been suggested to have peptidyltransferase activity; this is somewhat controversial. Makes several contacts with the 16S rRNA in the 70S ribosome. This chain is Large ribosomal subunit protein uL2, found in Rickettsia prowazekii (strain Madrid E).